A 294-amino-acid chain; its full sequence is Gap junction delta-3 protein (294 aa).

Residues 1 to 24 (MGEWAFLGSLLDAVQLQSPLVGRL) are Cytoplasmic-facing. The helical transmembrane segment at 25 to 45 (WLVVMLIFRILVLATVGGAVF) threads the bilayer. Residues 46-76 (EDEQEEFVCNTLQPGCRQTCYDRAFPVSHYR) lie on the Extracellular side of the membrane. A helical transmembrane segment spans residues 77 to 97 (FWLFHILLLSAPPVLFVVYSM). Residues 98–136 (HRAGKEAGGAEAAAQCAPGLPEAQCAPCALRARRARRCY) lie on the Cytoplasmic side of the membrane. A helical transmembrane segment spans residues 137–157 (LLSVALRLLAELTFLGGQALL). Residues 158-188 (YGFRVAPHFACAGPPCPHTVDCFVSRPTEKT) are Extracellular-facing. A helical membrane pass occupies residues 189 to 209 (VFVLFYFAVGLLSALLSVAEL). Residues 210–294 (GHLLWKGRPR…PATGRRDLAI (85 aa)) are Cytoplasmic-facing. The disordered stretch occupies residues 233–294 (EAQKLLPPPP…PATGRRDLAI (62 aa)). Over residues 238–250 (LPPPPPPPPPPAL) the composition is skewed to pro residues.

It belongs to the connexin family. Delta-type subfamily. As to quaternary structure, a connexon is composed of a hexamer of connexins. Interacts with TJP1. As to expression, expressed in vascular smooth muscle cells. Found in heart, colon, and artery (at protein level). Found in cerebral cortex, heart, liver, lung, kidney, spleen and testis.

It is found in the cell membrane. Its subcellular location is the cell junction. It localises to the gap junction. In terms of biological role, one gap junction consists of a cluster of closely packed pairs of transmembrane channels, the connexons, through which materials of low MW diffuse from one cell to a neighboring cell. The sequence is that of Gap junction delta-3 protein (GJD3) from Homo sapiens (Human).